The chain runs to 278 residues: NAD kinase (278 aa).

The active-site Proton acceptor is Asp-56. NAD(+) is bound by residues 56-57, 132-133, Arg-158, Asp-160, and 171-176; these read DG, NE, and TAYNKS.

It belongs to the NAD kinase family. A divalent metal cation serves as cofactor.

The protein localises to the cytoplasm. The enzyme catalyses NAD(+) + ATP = ADP + NADP(+) + H(+). Involved in the regulation of the intracellular balance of NAD and NADP, and is a key enzyme in the biosynthesis of NADP. Catalyzes specifically the phosphorylation on 2'-hydroxyl of the adenosine moiety of NAD to yield NADP. The sequence is that of NAD kinase from Streptococcus pyogenes serotype M1.